Here is a 122-residue protein sequence, read N- to C-terminus: Large ribosomal subunit protein uL14 (122 aa).

Belongs to the universal ribosomal protein uL14 family. Part of the 50S ribosomal subunit. Forms a cluster with proteins L3 and L19. In the 70S ribosome, L14 and L19 interact and together make contacts with the 16S rRNA in bridges B5 and B8.

Functionally, binds to 23S rRNA. Forms part of two intersubunit bridges in the 70S ribosome. This chain is Large ribosomal subunit protein uL14, found in Rhizobium meliloti (strain 1021) (Ensifer meliloti).